The sequence spans 327 residues: uncharacterized protein (327 aa).

Helical transmembrane passes span 68–88 (SIPAVLFWSVIIPAILYLFYP), 92–112 (FLHLWLWTLLAVVLHVFVDIF), 127–147 (WVALGLINTFDPFIFISHLAA), and 148–168 (IAIWYAGGSPGITFLSLYIIL).

It is found in the cell membrane. Its function is as follows. May act as a negative regulator for the transcription of mutY, fabL, sspE and yfhP. This is an uncharacterized protein from Bacillus subtilis (strain 168).